Consider the following 256-residue polypeptide: uncharacterized protein (256 aa).

This is an uncharacterized protein from Saccharomyces cerevisiae (strain ATCC 204508 / S288c) (Baker's yeast).